The sequence spans 133 residues: Crossover junction endodeoxyribonuclease Hjc (133 aa).

Glu-12 contacts Mg(2+). Ser-32 is a catalytic residue. 2 residues coordinate Mg(2+): Asp-36 and Glu-49.

It belongs to the Holliday junction resolvase Hjc family. As to quaternary structure, homodimer. Requires Mg(2+) as cofactor.

The catalysed reaction is Endonucleolytic cleavage at a junction such as a reciprocal single-stranded crossover between two homologous DNA duplexes (Holliday junction).. Functionally, a structure-specific endonuclease that resolves Holliday junction (HJ) intermediates during genetic recombination. Cleaves 4-way DNA junctions introducing paired nicks in opposing strands, leaving a 5'-terminal phosphate and a 3'-terminal hydroxyl group that are subsequently ligated to produce recombinant products. This is Crossover junction endodeoxyribonuclease Hjc from Methanocaldococcus jannaschii (strain ATCC 43067 / DSM 2661 / JAL-1 / JCM 10045 / NBRC 100440) (Methanococcus jannaschii).